A 66-amino-acid polypeptide reads, in one-letter code: Large ribosomal subunit protein bL33c (66 aa).

This sequence belongs to the bacterial ribosomal protein bL33 family.

The protein localises to the plastid. The protein resides in the chloroplast. This is Large ribosomal subunit protein bL33c from Acorus calamus (Sweet flag).